Consider the following 149-residue polypeptide: Alpha-crystallin A chain (149 aa).

Positions 41–149 (LFRSVLESGI…DASHGERPIP (109 aa)) constitute a sHSP domain. His89, Glu91, His96, and His143 together coordinate Zn(2+).

The protein belongs to the small heat shock protein (HSP20) family. Heteropolymer composed of three CRYAA and one CRYAB subunits. Inter-subunit bridging via zinc ions enhances stability, which is crucial as there is no protein turn over in the lens. Can also form homodimers and homotetramers (dimers of dimers) which serve as the building blocks of homooligomers. Within homooligomers, the zinc-binding motif is created from residues of 3 different molecules. His-89 and Glu-91 from one molecule are ligands of the zinc ion, and His-96 and His-143 residues from additional molecules complete the site with tetrahedral coordination geometry. Part of a complex required for lens intermediate filament formation composed of BFSP1, BFSP2 and CRYAA.

The protein resides in the cytoplasm. The protein localises to the nucleus. Its function is as follows. Contributes to the transparency and refractive index of the lens. May act as a chaperone, preventing aggregation of various proteins under a wide range of stress conditions. In Columba livia (Rock dove), this protein is Alpha-crystallin A chain (CRYAA).